A 262-amino-acid chain; its full sequence is Small ribosomal subunit protein uS2 (262 aa).

Positions 228-262 (VSNEEVAAEQNINLDDKEESEQAETTEENTSVESN) are disordered. Acidic residues predominate over residues 243-254 (DKEESEQAETTE).

This sequence belongs to the universal ribosomal protein uS2 family.

This chain is Small ribosomal subunit protein uS2, found in Staphylococcus epidermidis (strain ATCC 35984 / DSM 28319 / BCRC 17069 / CCUG 31568 / BM 3577 / RP62A).